Here is a 655-residue protein sequence, read N- to C-terminus: SRSF protein kinase 1 (655 aa).

The interval 1–57 is disordered; it reads MERKVLALQARKKRTKAKKDKAQRKPETQHRGSAPHSESDLPEQEEEILGSDDDEQE. Positions 10 to 22 are enriched in basic residues; that stretch reads ARKKRTKAKKDKA. The span at 40–57 shows a compositional bias: acidic residues; sequence DLPEQEEEILGSDDDEQE. Ser51 carries the phosphoserine; by CK2 modification. Positions 80 to 653 constitute a Protein kinase domain; the sequence is YHVIRKLGWG…AAECLRHPWL (574 aa). Residues 86–94 and Lys109 each bind ATP; that span reads LGWGHFSTV. The active-site Proton acceptor is Asp213. Disordered stretches follow at residues 238-341 and 397-417; these read WQRS…QDQT and FLSS…CTPI. A compositionally biased stretch (basic residues) spans 265–276; that stretch reads KNKKKKLKKKQK. Composition is skewed to basic and acidic residues over residues 277-288 and 304-318; these read RQAELLEKRMQE and NKQE…RPLK. 3 positions are modified to phosphoserine: Ser309, Ser311, and Ser333. Position 555 is a phosphoserine; by CK2 (Ser555).

This sequence belongs to the protein kinase superfamily. CMGC Ser/Thr protein kinase family. In terms of assembly, monomer. Found in a multisubunit complex containing seven proteins, named toposome, which separates entangled circular chromatin DNA during chromosome segregation. Interacts with HHV-1 ICP27 protein. Interacts with DNAJC8 and AHSA1/AHA1 and this mediates formation of a complex with the Hsp70 /Hsp90 machinery. Binds to IGF2BP1, SYNCRIP, HNRNPA2B1 and HNRNPC. Interacts with SAFB/SAFB1 and SAFB2 which inhibits its activity. Mg(2+) serves as cofactor.

Its subcellular location is the cytoplasm. The protein localises to the nucleus. The protein resides in the nucleoplasm. It localises to the nucleus matrix. It is found in the microsome. Its subcellular location is the nucleus speckle. The protein localises to the chromosome. The catalysed reaction is L-seryl-[protein] + ATP = O-phospho-L-seryl-[protein] + ADP + H(+). It catalyses the reaction L-threonyl-[protein] + ATP = O-phospho-L-threonyl-[protein] + ADP + H(+). With respect to regulation, activated by phosphorylation on Ser-51 and Ser-555. In terms of biological role, serine/arginine-rich protein-specific kinase which specifically phosphorylates its substrates at serine residues located in regions rich in arginine/serine dipeptides, known as RS domains and is involved in the phosphorylation of SR splicing factors and the regulation of splicing. Plays a central role in the regulatory network for splicing, controlling the intranuclear distribution of splicing factors in interphase cells and the reorganization of nuclear speckles during mitosis. Can influence additional steps of mRNA maturation, as well as other cellular activities, such as chromatin reorganization in somatic and sperm cells and cell cycle progression. Phosphorylates SFRS2, ZRSR2, LBR and PRM1. Phosphorylates SRSF1 using a directional (C-terminal to N-terminal) and a dual-track mechanism incorporating both processive phosphorylation (in which the kinase stays attached to the substrate after each round of phosphorylation) and distributive phosphorylation steps (in which the kinase and substrate dissociate after each phosphorylation event). The RS domain of SRSF1 binds first to a docking groove in the large lobe of the kinase domain of SRPK1. This induces certain structural changes in SRPK1 and/or RRM2 domain of SRSF1, allowing RRM2 to bind the kinase and initiate phosphorylation. The cycles continue for several phosphorylation steps in a processive manner (steps 1-8) until the last few phosphorylation steps (approximately steps 9-12). During that time, a mechanical stress induces the unfolding of the beta-4 motif in RRM2, which then docks at the docking groove of SRPK1. This also signals RRM2 to begin to dissociate, which facilitates SRSF1 dissociation after phosphorylation is completed. Can mediate hepatitis B virus (HBV) core protein phosphorylation. It plays a negative role in the regulation of HBV replication through a mechanism not involving the phosphorylation of the core protein but by reducing the packaging efficiency of the pregenomic RNA (pgRNA) without affecting the formation of the viral core particles. Can induce splicing of exon 10 in MAPT/TAU. The chain is SRSF protein kinase 1 from Pongo abelii (Sumatran orangutan).